Here is a 486-residue protein sequence, read N- to C-terminus: Glutamate--tRNA ligase (486 aa).

The 'HIGH' region motif lies at proline 11–asparagine 21. The 'KMSKS' region motif lies at lysine 255–arginine 259. Position 258 (lysine 258) interacts with ATP.

The protein belongs to the class-I aminoacyl-tRNA synthetase family. Glutamate--tRNA ligase type 1 subfamily. In terms of assembly, monomer.

It localises to the cytoplasm. The catalysed reaction is tRNA(Glu) + L-glutamate + ATP = L-glutamyl-tRNA(Glu) + AMP + diphosphate. Its function is as follows. Catalyzes the attachment of glutamate to tRNA(Glu) in a two-step reaction: glutamate is first activated by ATP to form Glu-AMP and then transferred to the acceptor end of tRNA(Glu). In Streptococcus pneumoniae (strain ATCC BAA-255 / R6), this protein is Glutamate--tRNA ligase.